The following is a 576-amino-acid chain: Putative export ATP-binding/permease protein RT0691 (576 aa).

Residues 20–303 (LIIVMISLLS…IFELLSEIHL (284 aa)) enclose the ABC transmembrane type-1 domain. The next 6 membrane-spanning stretches (helical) occupy residues 21-41 (IIVM…GSVF), 61-81 (ILYI…RSYF), 135-155 (FLSF…LMFF), 158-178 (FKLA…LIKF), 242-262 (ALFF…IVWI), and 277-297 (IISF…IFEL). An ABC transporter domain is found at 336 to 572 (IEFKNVDFTY…SEIYRNICRE (237 aa)). 371–378 (GRSGAGKS) contacts ATP.

The protein belongs to the ABC transporter superfamily. As to quaternary structure, homodimer.

It localises to the cell inner membrane. Functionally, part of an ABC transporter complex. Transmembrane domains (TMD) form a pore in the inner membrane and the ATP-binding domain (NBD) is responsible for energy generation. This chain is Putative export ATP-binding/permease protein RT0691, found in Rickettsia typhi (strain ATCC VR-144 / Wilmington).